Here is a 274-residue protein sequence, read N- to C-terminus: Putative homeobox protein Meis3-like 1 (274 aa).

Residues 12–65 enclose the MEIS N-terminal domain; that stretch reads GGDVCSSDSFNEDNTAFAKQVRSERPFFSSNPELDNLMIQAIQVLRFHLLELEK. Disordered stretches follow at residues 108–167 and 228–248; these read DSGS…KRGI and NRTG…GYTE. Polar residues predominate over residues 123 to 135; sequence GLASQSGDNSSDQ. The segment at residues 161 to 223 is a DNA-binding region (homeobox); the sequence is RNKKRGIFPK…NARRRIVQPM (63 aa).

It belongs to the TALE/MEIS homeobox family.

It localises to the nucleus. The protein is Putative homeobox protein Meis3-like 1 (MEIS3P1) of Homo sapiens (Human).